A 328-amino-acid chain; its full sequence is Porphobilinogen deaminase (328 aa).

Cysteine 250 carries the post-translational modification S-(dipyrrolylmethanemethyl)cysteine.

The protein belongs to the HMBS family. Monomer. The cofactor is dipyrromethane.

It catalyses the reaction 4 porphobilinogen + H2O = hydroxymethylbilane + 4 NH4(+). Its pathway is porphyrin-containing compound metabolism; protoporphyrin-IX biosynthesis; coproporphyrinogen-III from 5-aminolevulinate: step 2/4. Its function is as follows. Tetrapolymerization of the monopyrrole PBG into the hydroxymethylbilane pre-uroporphyrinogen in several discrete steps. The polypeptide is Porphobilinogen deaminase (Burkholderia ambifaria (strain ATCC BAA-244 / DSM 16087 / CCUG 44356 / LMG 19182 / AMMD) (Burkholderia cepacia (strain AMMD))).